The chain runs to 655 residues: Archaeal Lon protease (655 aa).

Topologically, residues M1–S123 are cytoplasmic. G57 to S64 is an ATP binding site. Residues R124–L144 traverse the membrane as a helical segment. R145 is a topological domain (extracellular). The helical transmembrane segment at S146–F166 threads the bilayer. At N167–A655 the chain is on the cytoplasmic side. The Lon proteolytic domain maps to G433–N618. Catalysis depends on residues S525 and K568.

The protein belongs to the peptidase S16 family. Archaeal LonB subfamily. Homohexamer. Organized in a ring with a central cavity.

The protein resides in the cell membrane. In terms of biological role, ATP-dependent serine protease that mediates the selective degradation of mutant and abnormal proteins as well as certain short-lived regulatory proteins. Degrades polypeptides processively. The polypeptide is Archaeal Lon protease (Thermoplasma volcanium (strain ATCC 51530 / DSM 4299 / JCM 9571 / NBRC 15438 / GSS1)).